The chain runs to 114 residues: PDZK1-interacting protein 1 (114 aa).

At 1-28 (MSALSLVILGLLMAVPPASCQQGLGNLQ) the chain is on the extracellular side. The helical transmembrane segment at 29–51 (PWMQGLIAVAVFLVLVAIAFAIN) threads the bilayer. The Cytoplasmic portion of the chain corresponds to 52 to 114 (HFWCQEEREP…EEGRVHSTPM (63 aa)). S85 is modified (phosphoserine). Residues 92–114 (SNEHENAYENTSEEEGRVHSTPM) form a disordered region. Residues 105–114 (EEGRVHSTPM) show a composition bias toward basic and acidic residues.

It belongs to the PDZK1-interacting protein 1/SMIM24 family. As to quaternary structure, forms a heterodimer (via N-terminal transmembrane helix) with SLC5A2/SGLT2 (via TM13); this interaction enhances SLC5A2 transporter activity. Interacts with PDZK1.

The protein localises to the apical cell membrane. Auxiliary protein of electrogenic Na(+)-coupled sugar symporter SLC5A2/SGLT2 and SLC5A1/SGLT1. Essential for the transporter activity of SLC5A2/SGLT2 but not SLC5A1/SGLT1. The sequence is that of PDZK1-interacting protein 1 from Sus scrofa (Pig).